The primary structure comprises 168 residues: Small ribosomal subunit protein uS5 (168 aa).

One can recognise an S5 DRBM domain in the interval Leu-13–Val-76.

This sequence belongs to the universal ribosomal protein uS5 family. As to quaternary structure, part of the 30S ribosomal subunit. Contacts proteins S4 and S8.

Functionally, with S4 and S12 plays an important role in translational accuracy. In terms of biological role, located at the back of the 30S subunit body where it stabilizes the conformation of the head with respect to the body. The protein is Small ribosomal subunit protein uS5 of Shewanella amazonensis (strain ATCC BAA-1098 / SB2B).